A 226-amino-acid polypeptide reads, in one-letter code: MHYYLIEARAPLYSVKVVDVYQVASAYPLPTPHAVVGALGAAMAHAGMCRGLQCMKEAEGLVVAARPAAVGELAKFPAVLWRTRGVLEDKSLPAGLEDYAGARDAMVREYVYAHAVKILLVTRKRVPQHVIRLMARLGDSESYVSVVDVLEGKPRECGGLVNVAVRAAKARRGSYTLYRALDERGNRELFAYPVVEEGGVYRRGGVEVGSKVLCLGEAVFPEGDGW.

The protein belongs to the CRISPR-associated protein Cas5 family. Subtype I-A/Apern subfamily. As to quaternary structure, can form a Cascade complex with Csa5, Cas7, Cas3, Cas3' and Cas8a2.

Its function is as follows. CRISPR (clustered regularly interspaced short palindromic repeat) is an adaptive immune system that provides protection against mobile genetic elements (viruses, transposable elements and conjugative plasmids). CRISPR clusters contain spacers, sequences complementary to antecedent mobile elements, and target invading nucleic acids. CRISPR clusters are transcribed and processed into CRISPR RNA (crRNA). The chain is CRISPR-associated protein Cas5 (cas5a) from Thermoproteus tenax (strain ATCC 35583 / DSM 2078 / JCM 9277 / NBRC 100435 / Kra 1).